The sequence spans 424 residues: MAYFIDRRLNGKNKSTVNRQRFLRRYKSQIKQSISEAINKRSVTDIESGESVSIPNADINEPMFHQGRGGRRHRVHPGNDHFVQNDKIERPQGGGGGGSGQGDASKDGEGEDEFVFQISKDEYLDLLFEDLALPNLKKTQHRQMNEYKTHRAGYTANGVPANISVVRSLQNSLARRMAMTAGKRRTLHELEESLEQLAHTEPAQLLEEERLRQEITELRQKIARVPFIDTFDLRYKNYERRAEPSSQAVMFCLMDVSGSMDQATKDMAKRFYILLYLFLSRNYKNVDVVYIRHHTQAKEVDEQEFFYSQETGGTIVSSALKLMEEVVRERYDPSQWNIYAAQASDGDNWADDSPLCHQILANQLLPMVRYYSYIEITRRSHQTLWREYETLRDTFDNFAMQHIRDQDDIYPVFRELFRKQTVGH.

Residues 46-109 (IESGESVSIP…GQGDASKDGE (64 aa)) are disordered. Positions 77-90 (PGNDHFVQNDKIER) are enriched in basic and acidic residues. Residues 92–101 (QGGGGGGSGQ) show a composition bias toward gly residues.

It belongs to the UPF0229 family.

In Pectobacterium carotovorum subsp. carotovorum (strain PC1), this protein is UPF0229 protein PC1_1960.